A 667-amino-acid chain; its full sequence is WD repeat-containing protein 48 homolog (667 aa).

WD repeat units follow at residues 26 to 65, 71 to 110, 113 to 152, 164 to 203, 206 to 245, 248 to 287, 290 to 329, and 349 to 388; these read QHRN…NDKY, HHND…CMST, THRD…ALTA, GSKD…RSMK, GHTE…CIQT, VHKE…NKML, EEKA…RCTL, and KGGA…KKEE. The disordered stretch occupies residues 591 to 615; sequence ETTPSGGNANNSLQNSQSDANSEGS.

Belongs to the WD repeat WDR48 family. Catalytic component of the Usp12-46 deubiquitylase complex consisting of Usp12-46, Wdr20 and Uaf1; regulatory subunit that, together wtih Wdr20, stabilizes Usp12-46. The Usp12-46 deubiquitylase complex associates with arr/arrow; the interaction leads to deubiquitination and stabilization of arr/arrow.

Functionally, regulatory component of the Usp12-46 deubiquitylase complex. activates deubiquitination by increasing the catalytic turnover without increasing the affinity of deubiquitinating enzymes for the substrate. The complex deubiquitylates the wg/wingless-signaling receptor arr/arrow, which stabilizes the receptor and increases its concentration at the cell surface; this enhances the sensitivity of cells to wg/wingless-signal stimulation. This increases the amplitude and spatial range of the signaling response to the wg/wingless morphogen gradient, facilitating the precise concentration-dependent regulation of its target genes. Together with Wdr20 and Usp12-46 required for wg/wingless-mediated signaling in the wing imaginal disc and for wg/wingless-dependent regulation of intestinal stem cell proliferation. This Drosophila virilis (Fruit fly) protein is WD repeat-containing protein 48 homolog.